The following is a 365-amino-acid chain: UDP-N-acetylglucosamine--N-acetylmuramyl-(pentapeptide) pyrophosphoryl-undecaprenol N-acetylglucosamine transferase (365 aa).

Residues 17-19, asparagine 129, arginine 167, serine 194, isoleucine 250, 269-274, and glutamine 295 each bind UDP-N-acetyl-alpha-D-glucosamine; these read TGG and ALTVSE.

Belongs to the glycosyltransferase 28 family. MurG subfamily.

It is found in the cell inner membrane. The catalysed reaction is di-trans,octa-cis-undecaprenyl diphospho-N-acetyl-alpha-D-muramoyl-L-alanyl-D-glutamyl-meso-2,6-diaminopimeloyl-D-alanyl-D-alanine + UDP-N-acetyl-alpha-D-glucosamine = di-trans,octa-cis-undecaprenyl diphospho-[N-acetyl-alpha-D-glucosaminyl-(1-&gt;4)]-N-acetyl-alpha-D-muramoyl-L-alanyl-D-glutamyl-meso-2,6-diaminopimeloyl-D-alanyl-D-alanine + UDP + H(+). It participates in cell wall biogenesis; peptidoglycan biosynthesis. Functionally, cell wall formation. Catalyzes the transfer of a GlcNAc subunit on undecaprenyl-pyrophosphoryl-MurNAc-pentapeptide (lipid intermediate I) to form undecaprenyl-pyrophosphoryl-MurNAc-(pentapeptide)GlcNAc (lipid intermediate II). The chain is UDP-N-acetylglucosamine--N-acetylmuramyl-(pentapeptide) pyrophosphoryl-undecaprenol N-acetylglucosamine transferase from Shewanella sediminis (strain HAW-EB3).